Consider the following 250-residue polypeptide: 5'-nucleotidase SurE (250 aa).

Residues Asp-8, Asp-9, Ser-40, and Asn-94 each coordinate a divalent metal cation.

It belongs to the SurE nucleotidase family. The cofactor is a divalent metal cation.

It localises to the cytoplasm. It catalyses the reaction a ribonucleoside 5'-phosphate + H2O = a ribonucleoside + phosphate. In terms of biological role, nucleotidase that shows phosphatase activity on nucleoside 5'-monophosphates. The sequence is that of 5'-nucleotidase SurE from Wolbachia sp. subsp. Drosophila simulans (strain wRi).